Reading from the N-terminus, the 118-residue chain is Large ribosomal subunit protein uL24 (118 aa).

The protein belongs to the universal ribosomal protein uL24 family. In terms of assembly, part of the 50S ribosomal subunit.

In terms of biological role, one of two assembly initiator proteins, it binds directly to the 5'-end of the 23S rRNA, where it nucleates assembly of the 50S subunit. Functionally, one of the proteins that surrounds the polypeptide exit tunnel on the outside of the subunit. The chain is Large ribosomal subunit protein uL24 from Prochlorococcus marinus (strain NATL2A).